Consider the following 485-residue polypeptide: GTPase Obg (485 aa).

In terms of domain architecture, Obg spans 2-159; sequence SKFIDRVVLH…RDLVLELKSV (158 aa). The tract at residues 64 to 84 is disordered; sequence PHAKAGNGKPGEGGNRDGKMG. The 181-residue stretch at 160 to 340 folds into the OBG-type G domain; the sequence is ADVGLVGFPS…LTFALADLVR (181 aa). Residues 166-173, 191-195, 212-215, 292-295, and 321-323 contribute to the GTP site; these read GFPSAGKS, FTTLV, DVPG, NKTD, and SAV. Mg(2+) contacts are provided by S173 and T193. An OCT domain is found at 358 to 438; sequence PIAVDESGFT…IGDVTFDWEP (81 aa). Residues 457 to 469 are compositionally biased toward basic and acidic residues; that stretch reads LEQSDRVSAAERK. The tract at residues 457–485 is disordered; that stretch reads LEQSDRVSAAERKHASRVRRGLVEDDEQR.

Belongs to the TRAFAC class OBG-HflX-like GTPase superfamily. OBG GTPase family. In terms of assembly, monomer. Mg(2+) serves as cofactor.

It localises to the cytoplasm. An essential GTPase which binds GTP, GDP and possibly (p)ppGpp with moderate affinity, with high nucleotide exchange rates and a fairly low GTP hydrolysis rate. Plays a role in control of the cell cycle, stress response, ribosome biogenesis and in those bacteria that undergo differentiation, in morphogenesis control. This is GTPase Obg from Nocardia farcinica (strain IFM 10152).